Here is a 153-residue protein sequence, read N- to C-terminus: Pheromone-binding protein Gp-9 (153 aa).

Residues 1-19 form the signal peptide; sequence MKTFVLHIFIFALVAFASA. Disulfide bonds link Cys37–Cys77, Cys73–Cys129, and Cys118–Cys138.

This sequence belongs to the PBP/GOBP family. As to quaternary structure, homodimer.

Its subcellular location is the secreted. Functionally, colony queen number, a major feature of social organization, is associated with worker genotype for Gp-9. Colonies are headed by either a single reproductive queen (monogyne form) or multiple queens (polygyne form). Differences in worker Gp-9 genotypes between social forms may cause differences in workers' abilities to recognize queens and regulate their numbers. This is Pheromone-binding protein Gp-9 from Solenopsis n. sp. (strain JP-2002) (Fire ant).